The chain runs to 532 residues: L-proline--[L-prolyl-carrier protein] ligase (532 aa).

The tract at residues 510–532 (KTDYRRLGLDAPPRPAAPLGTAR) is disordered.

This sequence belongs to the ATP-dependent AMP-binding enzyme family.

It carries out the reaction holo-[peptidyl-carrier protein] + L-proline + ATP = L-prolyl-[peptidyl-carrier protein] + AMP + diphosphate. In terms of biological role, involved in the biosynthesis of undecylprodigiosin. Catalyzes the conversion of L-proline to L-prolyl-AMP and the transfer of the L-prolyl group to acyl carrier protein RedO. The polypeptide is L-proline--[L-prolyl-carrier protein] ligase (Streptomyces coelicolor (strain ATCC BAA-471 / A3(2) / M145)).